We begin with the raw amino-acid sequence, 451 residues long: Tubulin alpha chain (451 aa).

Positions 1 to 4 (MREC) match the MREC motif motif. Gln11 provides a ligand contact to GTP. Lys40 carries the N6-acetyllysine modification. The GTP site is built by Glu71, Ser140, Gly144, Thr145, Thr179, Asn206, and Asn228. Glu71 provides a ligand contact to Mg(2+). Glu254 is an active-site residue. Residues 432–451 (YEEVGVDSVEGEGEEEGEEY) are disordered. Position 445 is a 5-glutamyl polyglutamate (Glu445).

It belongs to the tubulin family. Dimer of alpha and beta chains. A typical microtubule is a hollow water-filled tube with an outer diameter of 25 nm and an inner diameter of 15 nM. Alpha-beta heterodimers associate head-to-tail to form protofilaments running lengthwise along the microtubule wall with the beta-tubulin subunit facing the microtubule plus end conferring a structural polarity. Microtubules usually have 13 protofilaments but different protofilament numbers can be found in some organisms and specialized cells. Requires Mg(2+) as cofactor. Post-translationally, some glutamate residues at the C-terminus are polyglycylated, resulting in polyglycine chains on the gamma-carboxyl group. Glycylation is mainly limited to tubulin incorporated into axonemes (cilia and flagella) whereas glutamylation is prevalent in neuronal cells, centrioles, axonemes, and the mitotic spindle. Both modifications can coexist on the same protein on adjacent residues, and lowering polyglycylation levels increases polyglutamylation, and reciprocally. The precise function of polyglycylation is still unclear. In terms of processing, some glutamate residues at the C-terminus are polyglutamylated, resulting in polyglutamate chains on the gamma-carboxyl group. Polyglutamylation plays a key role in microtubule severing by spastin (SPAST). SPAST preferentially recognizes and acts on microtubules decorated with short polyglutamate tails: severing activity by SPAST increases as the number of glutamates per tubulin rises from one to eight, but decreases beyond this glutamylation threshold. Acetylation of alpha chains at Lys-40 is located inside the microtubule lumen. This modification has been correlated with increased microtubule stability, intracellular transport and ciliary assembly. Post-translationally, undergoes a tyrosination/detyrosination cycle, the cyclic removal and re-addition of a C-terminal tyrosine residue by the enzymes tubulin tyrosine carboxypeptidase (MATCAP, VASH1 or VASH2) and tubulin tyrosine ligase (TTL), respectively. In terms of processing, tyrosination promotes microtubule interaction with CAP-Gly microtubule plus-end tracking proteins. Tyrosinated tubulins regulate the initiation of dynein-driven motility. Detyrosination is involved in metaphase plate congression by guiding chromosomes during mitosis. Detyrosination increases microtubules-dependent mechanotransduction in dystrophic cardiac and skeletal muscle. In cardiomyocytes, detyrosinated microtubules are required to resist to contractile compression during contraction.

It is found in the cytoplasm. It localises to the cytoskeleton. The enzyme catalyses GTP + H2O = GDP + phosphate + H(+). In terms of biological role, tubulin is the major constituent of microtubules, a cylinder consisting of laterally associated linear protofilaments composed of alpha- and beta-tubulin heterodimers. Microtubules grow by the addition of GTP-tubulin dimers to the microtubule end, where a stabilizing cap forms. Below the cap, tubulin dimers are in GDP-bound state, owing to GTPase activity of alpha-tubulin. The polypeptide is Tubulin alpha chain (Torpedo marmorata (Marbled electric ray)).